Consider the following 868-residue polypeptide: Homeobox-leucine zipper protein HOX29 (868 aa).

Positions 9-72 (DASKYVRYTP…NRRCREKQRK (64 aa)) form a DNA-binding region, homeobox. A coiled-coil region spans residues 64 to 106 (RRCREKQRKESSRLQALNRKLTAMNKLLMEENDRLQKQVSQLV). The segment at 150-171 (VTSGHHHQQQQHNVVQPPPRDA) is disordered. The START domain maps to 169–397 (RDASPAGLMS…VAHEDTRSVI (229 aa)).

It belongs to the HD-ZIP homeobox family. Class III subfamily. Expressed in phloem.

It is found in the nucleus. In terms of biological role, probable transcription factor that may be necessary for the proper patterning of vascular bundles. In Oryza sativa subsp. japonica (Rice), this protein is Homeobox-leucine zipper protein HOX29 (HOX29).